Consider the following 498-residue polypeptide: Probable cytosol aminopeptidase (498 aa).

The Mn(2+) site is built by K264 and D269. K276 is an active-site residue. Positions 287, 346, and 348 each coordinate Mn(2+). R350 is a catalytic residue.

It belongs to the peptidase M17 family. The cofactor is Mn(2+).

It localises to the cytoplasm. It catalyses the reaction Release of an N-terminal amino acid, Xaa-|-Yaa-, in which Xaa is preferably Leu, but may be other amino acids including Pro although not Arg or Lys, and Yaa may be Pro. Amino acid amides and methyl esters are also readily hydrolyzed, but rates on arylamides are exceedingly low.. It carries out the reaction Release of an N-terminal amino acid, preferentially leucine, but not glutamic or aspartic acids.. In terms of biological role, presumably involved in the processing and regular turnover of intracellular proteins. Catalyzes the removal of unsubstituted N-terminal amino acids from various peptides. The chain is Probable cytosol aminopeptidase from Xanthobacter autotrophicus (strain ATCC BAA-1158 / Py2).